The following is a 142-amino-acid chain: Large ribosomal subunit protein uL16 (142 aa).

This sequence belongs to the universal ribosomal protein uL16 family. As to quaternary structure, part of the 50S ribosomal subunit.

Binds 23S rRNA and is also seen to make contacts with the A and possibly P site tRNAs. The chain is Large ribosomal subunit protein uL16 from Gemmatimonas aurantiaca (strain DSM 14586 / JCM 11422 / NBRC 100505 / T-27).